We begin with the raw amino-acid sequence, 498 residues long: ATP synthase subunit beta, chloroplastic (498 aa).

The span at 1–14 (MRTNPTTSRPGVST) shows a compositional bias: polar residues. A disordered region spans residues 1 to 20 (MRTNPTTSRPGVSTSEEKST). 172-179 (GGAGVGKT) contributes to the ATP binding site.

It belongs to the ATPase alpha/beta chains family. As to quaternary structure, F-type ATPases have 2 components, CF(1) - the catalytic core - and CF(0) - the membrane proton channel. CF(1) has five subunits: alpha(3), beta(3), gamma(1), delta(1), epsilon(1). CF(0) has four main subunits: a(1), b(1), b'(1) and c(9-12).

Its subcellular location is the plastid. The protein localises to the chloroplast thylakoid membrane. It catalyses the reaction ATP + H2O + 4 H(+)(in) = ADP + phosphate + 5 H(+)(out). Its function is as follows. Produces ATP from ADP in the presence of a proton gradient across the membrane. The catalytic sites are hosted primarily by the beta subunits. The sequence is that of ATP synthase subunit beta, chloroplastic from Hordeum vulgare (Barley).